A 280-amino-acid polypeptide reads, in one-letter code: MRGVKLPRLVPSRPVPPPPAAPGEVLAAAGGLRVHLGGRPVLDGVDVEVRAGEVLALVGPNGAGKSTLLGALAADVPAAEGVVRVHGRPVSDWSAPELALRRAVLPQSASLSFPFAVEEVVRMGRAPWAGGDRADEDEAAVAEAMARTEVAGFAGRPFSALSGGERARVALARVLAQRAPLLLLDEPTAALDLRHQELVLRLCRERARAGDAVVVVLHDLALAAAYADRVALLRSGRIAAGGPPSEVFAQGLLSEVYDQPVEVFPHPRTGALLVVPHRSP.

The ABC transporter domain occupies 26 to 260; the sequence is LAAAGGLRVH…GLLSEVYDQP (235 aa). Residue 59-66 participates in ATP binding; it reads GPNGAGKS.

The protein belongs to the ABC transporter superfamily. Heme (hemin) importer (TC 3.A.1.14.5) family. As to quaternary structure, the complex is composed of two ATP-binding proteins (HmuV), two transmembrane proteins (HmuU) and a solute-binding protein (HmuT).

The protein resides in the cell membrane. Functionally, part of the ABC transporter complex HmuTUV involved in hemin import. Responsible for energy coupling to the transport system. The polypeptide is Hemin import ATP-binding protein HmuV (Streptomyces coelicolor (strain ATCC BAA-471 / A3(2) / M145)).